Here is a 200-residue protein sequence, read N- to C-terminus: Protein GrpE (200 aa).

The span at 1-25 shows a compositional bias: basic and acidic residues; the sequence is MMSKQNKKDWKKFKDEHKEEHKVEN. The disordered stretch occupies residues 1–52; that stretch reads MMSKQNKKDWKKFKDEHKEEHKVENEILEEETDEESQHQEPALGHPSYTALE.

The protein belongs to the GrpE family. As to quaternary structure, homodimer.

It localises to the cytoplasm. In terms of biological role, participates actively in the response to hyperosmotic and heat shock by preventing the aggregation of stress-denatured proteins, in association with DnaK and GrpE. It is the nucleotide exchange factor for DnaK and may function as a thermosensor. Unfolded proteins bind initially to DnaJ; upon interaction with the DnaJ-bound protein, DnaK hydrolyzes its bound ATP, resulting in the formation of a stable complex. GrpE releases ADP from DnaK; ATP binding to DnaK triggers the release of the substrate protein, thus completing the reaction cycle. Several rounds of ATP-dependent interactions between DnaJ, DnaK and GrpE are required for fully efficient folding. In Legionella pneumophila subsp. pneumophila (strain Philadelphia 1 / ATCC 33152 / DSM 7513), this protein is Protein GrpE.